Here is a 674-residue protein sequence, read N- to C-terminus: Endopolyphosphatase (674 aa).

At 1-21 the chain is on the cytoplasmic side; the sequence is MVVVGKSEVRNVSMSRPKKKS. Propeptides (removed in mature form) lie at residues 1 to 83 and 385 to 674; these read MVVV…VIIK and EQST…YKDD. Lysine 6 is covalently cross-linked (Glycyl lysine isopeptide (Lys-Gly) (interchain with G-Cter in ubiquitin)). A helical; Signal-anchor for type II membrane protein transmembrane segment spans residues 22 to 42; the sequence is LIAILSTCVLFFLVFIIGAKF. Over 43-674 the chain is Vacuolar; it reads QYVSVFSKFL…SFASSGYKDD (632 aa). Asparagine 58 carries N-linked (GlcNAc...) asparagine glycosylation. The tract at residues 384–403 is disordered; sequence MEQSTRVQQGEDSNEEDEET. N-linked (GlcNAc...) asparagine glycosylation is found at asparagine 505 and asparagine 511.

The protein belongs to the endopolyphosphatase PPN1 family. In terms of assembly, homotetramer. Interacts with PPN2. The cofactor is Mn(2+). It depends on Mg(2+) as a cofactor. Co(2+) serves as cofactor. Zn(2+) is required as a cofactor. Processing by proteases in the vacuole is required for activation. Post-translationally, ubiquitinated. Ubiquitination mediates sorting into internal vesicles in late endosomes. TUL1 and RSP5 are required for ubiquitination. Other cytoplasmic Lys residues than Lys-6 may also be ubiquitinated. In terms of processing, N-glycosylated. N-glycosylation is essential for the protease-mediated maturation.

Its subcellular location is the vacuole membrane. The protein localises to the cytoplasm. The catalysed reaction is [phosphate](n+1) + n H2O = (n+1) phosphate + n H(+). It catalyses the reaction [phosphate](n) + H2O = [phosphate](n-1) + phosphate + H(+). The enzyme catalyses dATP + H2O = dADP + phosphate + H(+). Its activity is regulated as follows. Inhibited by heparin and EDTA. Its function is as follows. Catalyzes the hydrolysis of inorganic polyphosphate (polyP) chains of many hundreds of phosphate residues into shorter lengths. Has both exopolyphosphatase and endopolyphosphatase activities at different ratios depending on divalent cations by cleaving phosphate from the chain end and by fragmenting long-chain polymers into shorter ones, respectively. The limited digestion products are 1 and 3 P(i) residues. Also releases phosphate from dATP. dATP phosphohydrolase activity is about 7-fold lower than the exopolyphosphatase activity. The polypeptide is Endopolyphosphatase (Saccharomyces cerevisiae (strain ATCC 204508 / S288c) (Baker's yeast)).